A 210-amino-acid polypeptide reads, in one-letter code: Replication protein RepB (210 aa).

The protein belongs to the Gram-positive plasmids replication protein type 2 family.

Is essential for plasmid replication. Nicks the positive strand at the plus origin of replication. The sequence is that of Replication protein RepB (repB) from Streptococcus agalactiae.